Reading from the N-terminus, the 155-residue chain is MLKKKKTEVYALGEHISMSADKARRVINQIRGRSYEETLMILELMPYRACYPILKLIYSAAANASYNMGSSEANLVISKAEVNGGTTVKKLKPRARGRSFPIKRSTCHITIVMKDISLDDEYVEMYSLKKTRWKKKSTAMPYRDMYNSGGLWDKK.

The protein belongs to the universal ribosomal protein uL22 family. As to quaternary structure, part of the 50S ribosomal subunit.

Its subcellular location is the plastid. The protein localises to the chloroplast. Its function is as follows. This protein binds specifically to 23S rRNA. Functionally, the globular domain of the protein is located near the polypeptide exit tunnel on the outside of the subunit, while an extended beta-hairpin is found that lines the wall of the exit tunnel in the center of the 70S ribosome. The protein is Large ribosomal subunit protein uL22c (rpl22) of Nicotiana sylvestris (Wood tobacco).